A 529-amino-acid chain; its full sequence is uncharacterized protein (529 aa).

In terms of domain architecture, Radical SAM core spans 157 to 410 (DFPHIICEIE…FKNRVRENID (254 aa)). [4Fe-4S] cluster contacts are provided by Cys-171, Cys-176, and Cys-179.

[4Fe-4S] cluster is required as a cofactor.

This is an uncharacterized protein from Archaeoglobus fulgidus (strain ATCC 49558 / DSM 4304 / JCM 9628 / NBRC 100126 / VC-16).